An 876-amino-acid chain; its full sequence is MAP7 domain-containing protein 3 (876 aa).

3 disordered regions span residues 30–139 (AEER…KFKA), 162–200 (GGVMNADKSGKLENKRSSSLSRKDNRLHPRGDMQHVDNT), and 402–438 (TEAPLQARGESRLEASVEGQPEANVEGSPKNPEIDKR). Positions 39–54 (INSSAGANKRSSSTPD) are enriched in polar residues. The stretch at 58–136 (LKNDVKQQLA…KQKQAEDTEK (79 aa)) forms a coiled coil. 2 stretches are compositionally biased toward basic and acidic residues: residues 60–139 (NDVK…KFKA) and 169–196 (KSGKLENKRSSSLSRKDNRLHPRGDMQH). 2 positions are modified to phosphoserine: serine 417 and serine 483. 2 coiled-coil regions span residues 549-578 (IQIRHAAYEQSKNEKERLQKEETKQRIARK) and 626-658 (SAMMKSRDSAEQRKKEQENILQHWQERLERRKA). Disordered stretches follow at residues 558 to 683 (QSKN…EIFP) and 742 to 783 (IQGK…NPNH). Composition is skewed to basic and acidic residues over residues 559-590 (SKNEKERLQKEETKQRIARKPEIMAEKLDKVP) and 630-659 (KSRDSAEQRKKEQENILQHWQERLERRKAS). Residues 665–679 (SEDEADDEGESEDSL) are compositionally biased toward acidic residues. Over residues 750–763 (SAKKPPTRPIRSRK) the composition is skewed to basic residues. The segment covering 771–782 (IRPTQSASSNPN) has biased composition (polar residues).

The protein belongs to the MAP7 family. As to expression, high expression in lung, skeletal muscle, brain, and kidney, with much weaker expression in spleen, small intestine, liver, and heart.

It is found in the cytoplasm. Its subcellular location is the cytoskeleton. It localises to the spindle. Promotes the assembly and stability of microtubules. This is MAP7 domain-containing protein 3 (Map7d3) from Mus musculus (Mouse).